A 435-amino-acid chain; its full sequence is 3-phosphoshikimate 1-carboxyvinyltransferase (435 aa).

Positions 23, 24, and 28 each coordinate 3-phosphoshikimate. K23 is a phosphoenolpyruvate binding site. Positions 96 and 124 each coordinate phosphoenolpyruvate. The 3-phosphoshikimate site is built by S167, S168, Q169, S196, E311, and H340. Residue Q169 coordinates phosphoenolpyruvate. Catalysis depends on E311, which acts as the Proton acceptor. Phosphoenolpyruvate contacts are provided by R344, R385, and K410.

This sequence belongs to the EPSP synthase family. As to quaternary structure, monomer.

It is found in the cytoplasm. It catalyses the reaction 3-phosphoshikimate + phosphoenolpyruvate = 5-O-(1-carboxyvinyl)-3-phosphoshikimate + phosphate. The protein operates within metabolic intermediate biosynthesis; chorismate biosynthesis; chorismate from D-erythrose 4-phosphate and phosphoenolpyruvate: step 6/7. Its function is as follows. Catalyzes the transfer of the enolpyruvyl moiety of phosphoenolpyruvate (PEP) to the 5-hydroxyl of shikimate-3-phosphate (S3P) to produce enolpyruvyl shikimate-3-phosphate and inorganic phosphate. This chain is 3-phosphoshikimate 1-carboxyvinyltransferase, found in Mycolicibacterium paratuberculosis (strain ATCC BAA-968 / K-10) (Mycobacterium paratuberculosis).